We begin with the raw amino-acid sequence, 312 residues long: Pseudouridine-5'-phosphate glycosidase (312 aa).

The active-site Proton donor is Glu31. Substrate is bound by residues Lys93 and Val113. Asp145 is a binding site for Mn(2+). 147–149 (SAD) is a substrate binding site. Catalysis depends on Lys166, which acts as the Nucleophile.

This sequence belongs to the pseudouridine-5'-phosphate glycosidase family. Homotrimer. It depends on Mn(2+) as a cofactor. Requires Fe(2+) as cofactor. Co(2+) is required as a cofactor.

The catalysed reaction is D-ribose 5-phosphate + uracil = psi-UMP + H2O. With respect to regulation, inhibited by Zn(2+) and Ni(2+). Functionally, catalyzes the reversible cleavage of pseudouridine 5'-phosphate (PsiMP) to ribose 5-phosphate and uracil. Functions biologically in the cleavage direction, as part of a pseudouridine degradation pathway. In Escherichia coli (strain K12), this protein is Pseudouridine-5'-phosphate glycosidase.